The following is a 922-amino-acid chain: Lysine-specific demethylase 7A (922 aa).

The segment at 6 to 57 (PVYCVCRQPYDVSRFMIECDICKDWFHSSCVKVEEHQAADIDLYHCPNCEVL) adopts a PHD-type zinc-finger fold. Positions 199–355 (FSDTKMADLV…MQLRCYEMEK (157 aa)) constitute a JmjC domain. T248 provides a ligand contact to substrate. The Fe cation site is built by H251 and D253. Residue K268 coordinates substrate. H323 contacts Fe cation. Disordered regions lie at residues 445 to 490 (EEEG…TKTP), 565 to 607 (RSLY…TQKP), 622 to 711 (GSSE…EQEA), 754 to 773 (GKEH…HHVK), and 872 to 902 (LHPT…MATA). A compositionally biased stretch (basic residues) spans 473 to 483 (HHSGRKARRLR). Residues 648–666 (ESESSGDDDDEEEEEEEER) are compositionally biased toward acidic residues. 2 stretches are compositionally biased toward basic and acidic residues: residues 667–683 (QEPI…RRLP) and 691–701 (PDHDSPQKREC).

This sequence belongs to the JHDM1 histone demethylase family. JHDM1D subfamily. Fe(2+) is required as a cofactor.

The protein localises to the nucleus. Histone demethylase required for brain development. Specifically demethylates dimethylated 'Lys-9' and 'Lys-27' (H3K9me2 and H3K27me2, respectively) of histone H3 and monomethylated histone H4 'Lys-20' residue (H4K20Me1), thereby playing a central role in histone code. The polypeptide is Lysine-specific demethylase 7A (kdm7a) (Xenopus tropicalis (Western clawed frog)).